Reading from the N-terminus, the 463-residue chain is Argininosuccinate lyase (463 aa).

The protein belongs to the lyase 1 family. Argininosuccinate lyase subfamily.

The protein localises to the cytoplasm. It catalyses the reaction 2-(N(omega)-L-arginino)succinate = fumarate + L-arginine. It participates in amino-acid biosynthesis; L-arginine biosynthesis; L-arginine from L-ornithine and carbamoyl phosphate: step 3/3. This is Argininosuccinate lyase from Thermosynechococcus vestitus (strain NIES-2133 / IAM M-273 / BP-1).